The chain runs to 206 residues: Ribosomal RNA small subunit methyltransferase G (206 aa).

S-adenosyl-L-methionine contacts are provided by residues G73, L78, V124–E125, and R139.

Belongs to the methyltransferase superfamily. RNA methyltransferase RsmG family.

It is found in the cytoplasm. The enzyme catalyses guanosine(527) in 16S rRNA + S-adenosyl-L-methionine = N(7)-methylguanosine(527) in 16S rRNA + S-adenosyl-L-homocysteine. In terms of biological role, specifically methylates the N7 position of guanine in position 527 of 16S rRNA. This Idiomarina loihiensis (strain ATCC BAA-735 / DSM 15497 / L2-TR) protein is Ribosomal RNA small subunit methyltransferase G.